Consider the following 316-residue polypeptide: Peroxidase 31 (316 aa).

The N-terminal stretch at 1–19 (MASLKSLFLLFLFFFTAQS) is a signal peptide. Intrachain disulfides connect cysteine 30-cysteine 111, cysteine 63-cysteine 68, cysteine 117-cysteine 312, and cysteine 196-cysteine 222. Residue histidine 61 is the Proton acceptor of the active site. Aspartate 62, glycine 67, aspartate 69, and serine 71 together coordinate Ca(2+). A substrate-binding site is contributed by proline 159. Residue histidine 189 coordinates heme b. Serine 190 serves as a coordination point for Ca(2+). Asparagine 206 carries N-linked (GlcNAc...) asparagine glycosylation. Residues aspartate 236, threonine 239, and aspartate 244 each contribute to the Ca(2+) site.

It belongs to the peroxidase family. Classical plant (class III) peroxidase subfamily. It depends on heme b as a cofactor. Ca(2+) serves as cofactor.

The protein resides in the secreted. It catalyses the reaction 2 a phenolic donor + H2O2 = 2 a phenolic radical donor + 2 H2O. Functionally, removal of H(2)O(2), oxidation of toxic reductants, biosynthesis and degradation of lignin, suberization, auxin catabolism, response to environmental stresses such as wounding, pathogen attack and oxidative stress. These functions might be dependent on each isozyme/isoform in each plant tissue. The sequence is that of Peroxidase 31 (PER31) from Arabidopsis thaliana (Mouse-ear cress).